A 40-amino-acid chain; its full sequence is Natriuretic peptide TNPd (40 aa).

Cysteine 9 and cysteine 25 are joined by a disulfide.

The protein belongs to the natriuretic peptide family. In terms of tissue distribution, expressed by the venom gland.

It localises to the secreted. In terms of biological role, snake venom natriuretic peptide that exhibits vasoactive and hypotensive activity. Stimulates cGMP production through the natriuretic peptide receptor 1 (NPR1) with very high potencies for the rat NPR1 (EC(50)=18 nM), and very weak potencies over human NPR1 (30% activation at 10 uM). The polypeptide is Natriuretic peptide TNPd (Oxyuranus microlepidotus (Inland taipan)).